A 214-amino-acid chain; its full sequence is Phosphoheptose isomerase (214 aa).

Residues 51-209 form the SIS domain; that stretch reads IASTFEDGGK…IDLVERLLGY (159 aa). A substrate-binding site is contributed by 66-68; sequence NGG. 2 residues coordinate Zn(2+): His-75 and Glu-79. Residues Glu-79, 110–111, 136–138, Ser-141, and Gln-189 each bind substrate; these read ND and STS. Gln-189 and His-197 together coordinate Zn(2+).

It belongs to the SIS family. GmhA subfamily. It depends on Zn(2+) as a cofactor.

The protein localises to the cytoplasm. It catalyses the reaction 2 D-sedoheptulose 7-phosphate = D-glycero-alpha-D-manno-heptose 7-phosphate + D-glycero-beta-D-manno-heptose 7-phosphate. Its pathway is carbohydrate biosynthesis; D-glycero-D-manno-heptose 7-phosphate biosynthesis; D-glycero-alpha-D-manno-heptose 7-phosphate and D-glycero-beta-D-manno-heptose 7-phosphate from sedoheptulose 7-phosphate: step 1/1. Functionally, catalyzes the isomerization of sedoheptulose 7-phosphate in D-glycero-D-manno-heptose 7-phosphate. This is Phosphoheptose isomerase from Chlorobium limicola (strain DSM 245 / NBRC 103803 / 6330).